The sequence spans 895 residues: Isoleucine--tRNA ligase (895 aa).

A 'HIGH' region motif is present at residues 57–67 (PYANGSIHVGH). Residue Glu549 coordinates L-isoleucyl-5'-AMP. Residues 590-594 (KMSKS) carry the 'KMSKS' region motif. Lys593 is a binding site for ATP. Residues Cys869, Cys872, Cys888, and Cys891 each contribute to the Zn(2+) site.

The protein belongs to the class-I aminoacyl-tRNA synthetase family. IleS type 1 subfamily. Monomer. Zn(2+) is required as a cofactor.

The protein localises to the cytoplasm. The enzyme catalyses tRNA(Ile) + L-isoleucine + ATP = L-isoleucyl-tRNA(Ile) + AMP + diphosphate. Catalyzes the attachment of isoleucine to tRNA(Ile). As IleRS can inadvertently accommodate and process structurally similar amino acids such as valine, to avoid such errors it has two additional distinct tRNA(Ile)-dependent editing activities. One activity is designated as 'pretransfer' editing and involves the hydrolysis of activated Val-AMP. The other activity is designated 'posttransfer' editing and involves deacylation of mischarged Val-tRNA(Ile). This chain is Isoleucine--tRNA ligase, found in Mycoplasma genitalium (strain ATCC 33530 / DSM 19775 / NCTC 10195 / G37) (Mycoplasmoides genitalium).